A 131-amino-acid polypeptide reads, in one-letter code: Large ribosomal subunit protein uL24 (131 aa).

This sequence belongs to the universal ribosomal protein uL24 family. Part of the 50S ribosomal subunit.

Its function is as follows. One of two assembly initiator proteins, it binds directly to the 5'-end of the 23S rRNA, where it nucleates assembly of the 50S subunit. Located at the polypeptide exit tunnel on the outside of the subunit. The protein is Large ribosomal subunit protein uL24 of Korarchaeum cryptofilum (strain OPF8).